A 153-amino-acid polypeptide reads, in one-letter code: Protein E6 (153 aa).

2 zinc fingers span residues 33 to 69 (CVYC…CNFC) and 106 to 142 (CYRC…CLQC). The PDZ-binding domain signature appears at 151-153 (TAV).

Belongs to the papillomaviridae E6 protein family. In terms of assembly, forms homodimers. Interacts with ubiquitin-protein ligase UBE3A/E6-AP and thus forms a complex with human TP53. Interacts with human NFX1 and MAGI3. Interacts with human IRF3; this interaction inhibits the establishment of antiviral state. Interacts with human TYK2; this interaction inhibits JAK-STAT activation by interferon alpha. Interacts with host DLG1; this interaction leads to the proteasomal degradation of DLG1.

The protein resides in the host cytoplasm. The protein localises to the host nucleus. Plays a major role in the induction and maintenance of cellular transformation. Acts mainly as an oncoprotein by stimulating the destruction of many host cell key regulatory proteins. E6 associates with host UBE3A/E6-AP ubiquitin-protein ligase, and inactivates tumor suppressors TP53 and TP73 by targeting them to the 26S proteasome for degradation. In turn, DNA damage and chromosomal instabilities increase and lead to cell proliferation and cancer development. The complex E6/E6AP targets several other substrates to degradation via the proteasome including host DLG1 or NFX1, a repressor of human telomerase reverse transcriptase (hTERT). The resulting increased expression of hTERT prevents the shortening of telomere length leading to cell immortalization. Other cellular targets including BAK1, Fas-associated death domain-containing protein (FADD) and procaspase 8, are degraded by E6/E6AP causing inhibition of apoptosis. E6 also inhibits immune response by interacting with host IRF3 and TYK2. These interactions prevent IRF3 transcriptional activities and inhibit TYK2-mediated JAK-STAT activation by interferon alpha resulting in inhibition of the interferon signaling pathway. The chain is Protein E6 from Homo sapiens (Human).